The sequence spans 1016 residues: Formate dehydrogenase-O major subunit (1016 aa).

The segment at residues methionine 1–alanine 33 is a signal peptide (tat-type signal). One can recognise a 4Fe-4S Mo/W bis-MGD-type domain in the interval threonine 43–serine 106. [4Fe-4S] cluster-binding residues include cysteine 50, cysteine 53, cysteine 57, and cysteine 92. A non-standard amino acid (selenocysteine) is located at residue selenocysteine 196.

It belongs to the prokaryotic molybdopterin-containing oxidoreductase family. In terms of assembly, formate dehydrogenase is a membrane-bound complex, formed by subunits alpha, beta and gamma. It depends on Mo-bis(molybdopterin guanine dinucleotide) as a cofactor. The cofactor is [4Fe-4S] cluster. In terms of processing, exported by the Tat system. The position of the signal peptide cleavage has not been experimentally proven.

It is found in the periplasm. The catalysed reaction is formate + NAD(+) = CO2 + NADH. Its function is as follows. Allows to use formate as major electron donor during aerobic respiration. Subunit alpha possibly forms the active site. The sequence is that of Formate dehydrogenase-O major subunit (fdoG) from Escherichia coli (strain K12).